We begin with the raw amino-acid sequence, 152 residues long: MMKKIDVKILDPRVGKEFPLPTYATSGSAGLDLRACLDDAVELAPGDTTLVPTGLAIHIADPSLAAMMLPRSGLGHKHGIVLGNLVGLIDSDYQGQLMISVWNRGQDNFTIQPGERIAQMIFVPVVQAEFNLVEDFDATDRGEGGFGHSGRQ.

Residues 71 to 73 (RSG), N84, 88 to 90 (LID), and M98 each bind substrate.

It belongs to the dUTPase family. In terms of assembly, homotrimer. Mg(2+) serves as cofactor.

It carries out the reaction dUTP + H2O = dUMP + diphosphate + H(+). Its pathway is pyrimidine metabolism; dUMP biosynthesis; dUMP from dCTP (dUTP route): step 2/2. In terms of biological role, this enzyme is involved in nucleotide metabolism: it produces dUMP, the immediate precursor of thymidine nucleotides and it decreases the intracellular concentration of dUTP so that uracil cannot be incorporated into DNA. This Escherichia coli O1:K1 / APEC protein is Deoxyuridine 5'-triphosphate nucleotidohydrolase.